Reading from the N-terminus, the 212-residue chain is Methylthioribulose-1-phosphate dehydratase (212 aa).

2 residues coordinate Zn(2+): His-97 and His-99.

It belongs to the aldolase class II family. MtnB subfamily. Homotetramer. Requires Zn(2+) as cofactor.

The enzyme catalyses 5-(methylsulfanyl)-D-ribulose 1-phosphate = 5-methylsulfanyl-2,3-dioxopentyl phosphate + H2O. The protein operates within amino-acid biosynthesis; L-methionine biosynthesis via salvage pathway; L-methionine from S-methyl-5-thio-alpha-D-ribose 1-phosphate: step 2/6. Functionally, catalyzes the dehydration of methylthioribulose-1-phosphate (MTRu-1-P) into 2,3-diketo-5-methylthiopentyl-1-phosphate (DK-MTP-1-P). This chain is Methylthioribulose-1-phosphate dehydratase, found in Bacillus cereus (strain AH187).